The sequence spans 146 residues: uncharacterized protein (146 aa).

The chain crosses the membrane as a helical span at residues phenylalanine 7–asparagine 27.

It belongs to the asfivirus E146L family.

The protein localises to the host membrane. It is found in the virion. This is an uncharacterized protein from Ornithodoros (relapsing fever ticks).